The primary structure comprises 205 residues: Holliday junction branch migration complex subunit RuvA (205 aa).

The segment at 1-64 (MIGRLRGVLI…EDAQLLYGFI (64 aa)) is domain I. Positions 65–143 (TKKERSLFRL…SLMEASVGSE (79 aa)) are domain II. Positions 144–156 (REFVLQSNYSPAP) are flexible linker. Positions 157–205 (TVNSAEEDAISALLSLGYKPPQASKAVSAAYKEGMDSETLIKAALKSML) are domain III.

This sequence belongs to the RuvA family. In terms of assembly, homotetramer. Forms an RuvA(8)-RuvB(12)-Holliday junction (HJ) complex. HJ DNA is sandwiched between 2 RuvA tetramers; dsDNA enters through RuvA and exits via RuvB. An RuvB hexamer assembles on each DNA strand where it exits the tetramer. Each RuvB hexamer is contacted by two RuvA subunits (via domain III) on 2 adjacent RuvB subunits; this complex drives branch migration. In the full resolvosome a probable DNA-RuvA(4)-RuvB(12)-RuvC(2) complex forms which resolves the HJ.

The protein localises to the cytoplasm. In terms of biological role, the RuvA-RuvB-RuvC complex processes Holliday junction (HJ) DNA during genetic recombination and DNA repair, while the RuvA-RuvB complex plays an important role in the rescue of blocked DNA replication forks via replication fork reversal (RFR). RuvA specifically binds to HJ cruciform DNA, conferring on it an open structure. The RuvB hexamer acts as an ATP-dependent pump, pulling dsDNA into and through the RuvAB complex. HJ branch migration allows RuvC to scan DNA until it finds its consensus sequence, where it cleaves and resolves the cruciform DNA. The chain is Holliday junction branch migration complex subunit RuvA from Shewanella sp. (strain MR-4).